The following is a 431-amino-acid chain: Glutamate-1-semialdehyde 2,1-aminomutase (431 aa).

An N6-(pyridoxal phosphate)lysine modification is found at Lys-269.

It belongs to the class-III pyridoxal-phosphate-dependent aminotransferase family. HemL subfamily. In terms of assembly, homodimer. It depends on pyridoxal 5'-phosphate as a cofactor.

The protein resides in the cytoplasm. It catalyses the reaction (S)-4-amino-5-oxopentanoate = 5-aminolevulinate. Its pathway is porphyrin-containing compound metabolism; protoporphyrin-IX biosynthesis; 5-aminolevulinate from L-glutamyl-tRNA(Glu): step 2/2. It participates in porphyrin-containing compound metabolism; chlorophyll biosynthesis. This chain is Glutamate-1-semialdehyde 2,1-aminomutase, found in Chlorobaculum parvum (strain DSM 263 / NCIMB 8327) (Chlorobium vibrioforme subsp. thiosulfatophilum).